A 356-amino-acid chain; its full sequence is UDP-N-acetylglucosamine--N-acetylmuramyl-(pentapeptide) pyrophosphoryl-undecaprenol N-acetylglucosamine transferase (356 aa).

UDP-N-acetyl-alpha-D-glucosamine is bound by residues Thr14 to Gly16, Asn126, Arg162, Ser190, Ile244, and Gln289.

This sequence belongs to the glycosyltransferase 28 family. MurG subfamily.

The protein resides in the cell inner membrane. The enzyme catalyses di-trans,octa-cis-undecaprenyl diphospho-N-acetyl-alpha-D-muramoyl-L-alanyl-D-glutamyl-meso-2,6-diaminopimeloyl-D-alanyl-D-alanine + UDP-N-acetyl-alpha-D-glucosamine = di-trans,octa-cis-undecaprenyl diphospho-[N-acetyl-alpha-D-glucosaminyl-(1-&gt;4)]-N-acetyl-alpha-D-muramoyl-L-alanyl-D-glutamyl-meso-2,6-diaminopimeloyl-D-alanyl-D-alanine + UDP + H(+). The protein operates within cell wall biogenesis; peptidoglycan biosynthesis. Cell wall formation. Catalyzes the transfer of a GlcNAc subunit on undecaprenyl-pyrophosphoryl-MurNAc-pentapeptide (lipid intermediate I) to form undecaprenyl-pyrophosphoryl-MurNAc-(pentapeptide)GlcNAc (lipid intermediate II). In Cupriavidus pinatubonensis (strain JMP 134 / LMG 1197) (Cupriavidus necator (strain JMP 134)), this protein is UDP-N-acetylglucosamine--N-acetylmuramyl-(pentapeptide) pyrophosphoryl-undecaprenol N-acetylglucosamine transferase.